Consider the following 537-residue polypeptide: NEDD4-binding protein 3 (537 aa).

S172 carries the post-translational modification Phosphoserine. 3 disordered regions span residues 173–234 (LDEG…VLSC), 328–361 (KELR…EARW), and 423–458 (QEQA…REGA). The span at 178 to 207 (PEPSLSDSSSGGSFGRSPGTGPSPFSSSLG) shows a compositional bias: low complexity. Residues 295-501 (VERLHEVAQK…RVLRYQREIQ (207 aa)) are a coiled coil. Over residues 351 to 361 (PNARPEEEARW) the composition is skewed to basic and acidic residues.

It belongs to the N4BP3 family. In terms of assembly, binds NEDD4. Interacts with 14-3-3 proteins. Interacts with MAVS.

It is found in the cytoplasmic vesicle. The protein localises to the cell projection. The protein resides in the axon. Its subcellular location is the dendrite. Plays a positive role in the antiviral innate immune signaling pathway. Mechanistically, interacts with MAVS and functions as a positive regulator to promote 'Lys-63'-linked polyubiquitination of MAVS and thus strengthens the interaction between MAVS and TRAF2. Also plays a role in axon and dendrite arborization during cranial nerve development. May also be important for neural crest migration and early development of other anterior structures including eye, brain and cranial cartilage. The polypeptide is NEDD4-binding protein 3 (N4bp3) (Mus musculus (Mouse)).